Here is a 193-residue protein sequence, read N- to C-terminus: Mesogenin-1 (193 aa).

Residues 34–59 (GPFELNQASPSQSLSPAPSLESYSSS) form a disordered region. A compositionally biased stretch (low complexity) spans 40 to 59 (QASPSQSLSPAPSLESYSSS). Residues 124–178 (QRRRKASEREKLRMRTLADALHTLRNYLPPVYSQRGQPLTKIQTLKYTIKYIGEL) enclose the bHLH domain.

It localises to the nucleus. Its function is as follows. Involved in specifying the paraxial, but not dorsal, mesoderm. May regulate the expression of T-box transcription factors required for mesoderm formation and differentiation. This chain is Mesogenin-1 (MSGN1), found in Homo sapiens (Human).